The primary structure comprises 339 residues: Cyclin-Y-like protein 1 (339 aa).

The region spanning Gln181–Asn263 is the Cyclin N-terminal domain.

Belongs to the cyclin family. Cyclin Y subfamily.

The protein localises to the cell membrane. Functionally, key regulator of Wnt signaling implicated in various biological processes such as embryonic neurogenesis. The chain is Cyclin-Y-like protein 1 (ccnyl1) from Danio rerio (Zebrafish).